The sequence spans 122 residues: MALNIENIVAELETATILELSELVKAIEEKFDVSAAAPVAVAGPAAGGAAEEQTEFTVELTAAGDQKVKVIKAVREATGLGLKEAKAVVDGAPAPVKEAVSKEEAEALKAALEEVGASVTVK.

Belongs to the bacterial ribosomal protein bL12 family. In terms of assembly, homodimer. Part of the ribosomal stalk of the 50S ribosomal subunit. Forms a multimeric L10(L12)X complex, where L10 forms an elongated spine to which 2 to 4 L12 dimers bind in a sequential fashion. Binds GTP-bound translation factors.

In terms of biological role, forms part of the ribosomal stalk which helps the ribosome interact with GTP-bound translation factors. Is thus essential for accurate translation. The chain is Large ribosomal subunit protein bL12 from Enterococcus faecalis (strain ATCC 700802 / V583).